We begin with the raw amino-acid sequence, 280 residues long: Purine nucleoside phosphorylase (280 aa).

Residues S15 and 55–56 (RH) contribute to the phosphate site. A substrate-binding site is contributed by M194. Position 195 (T195) interacts with phosphate. Substrate is bound at residue 218 to 220 (DLD).

The protein belongs to the PNP/MTAP phosphorylase family. MTAP subfamily. As to quaternary structure, homohexamer. Dimer of a homotrimer.

The catalysed reaction is a purine D-ribonucleoside + phosphate = a purine nucleobase + alpha-D-ribose 1-phosphate. It functions in the pathway purine metabolism; purine nucleoside salvage. In terms of biological role, purine nucleoside phosphorylase involved in purine salvage. The polypeptide is Purine nucleoside phosphorylase (Streptomyces coelicolor (strain ATCC BAA-471 / A3(2) / M145)).